The sequence spans 527 residues: Serine/threonine-protein kinase NLK (527 aa).

Sufficient for interaction with DAPK3 regions lie at residues 1 to 125 (MSLC…KAHH) and 124 to 416 (HHHQ…SKRI). 2 required for interaction with TAB2 regions span residues 1–304 (MSLC…VVTQ) and 434–527 (YHTC…LVWE). Disordered stretches follow at residues 22–72 (AAAA…SSAA) and 90–139 (QQPY…LDIE). Residues 26–54 (GHHHHHHHHLPHLPPPHLHHHHHPQHHLH) are compositionally biased toward basic residues. Positions 103–119 (PGPAAAAPAQVQAAAAA) are enriched in low complexity. The segment covering 122–131 (KAHHHQHSHH) has biased composition (basic residues). In terms of domain architecture, Protein kinase spans 138–427 (IEPDRPIGYG…AKDALAHPYL (290 aa)). ATP is bound by residues 144-152 (IGYGAFGVV) and Lys-167. Asp-264 (proton acceptor) is an active-site residue. Position 298 is a phosphothreonine; by autocatalysis (Thr-298). The TQE motif lies at 298–300 (TQE). Residues 428-527 (DEGRLRYHTC…EMPPSPLVWE (100 aa)) form a required for homodimerization and kinase activation and localization to the nucleus region. Position 522 is a phosphoserine (Ser-522).

Belongs to the protein kinase superfamily. CMGC Ser/Thr protein kinase family. MAP kinase subfamily. In terms of assembly, homodimer. Homodimerization is required for intermolecular autophosphorylation, kinase activation and nuclear localization. Interacts with RNF138/NARF. Interacts with FOXO1 and FOXO3. Interacts with the upstream activating kinases HIPK2 and MAP3K7/TAK1. Interaction with MAP3K7/TAK1 seems to be indirect, and may be mediated by other proteins such as STAT3, TAB1 and TAB2. Interacts with and phosphorylates a number of transcription factors including FOXO4, LEF1, MYB, MYBL1, MYBL2, NOTCH1 and TCF7L2/TCF4. May interact with components of cullin-RING-based SCF (SKP1-CUL1-F-box protein) E3 ubiquitin-protein ligase complexes. Interacts with MEF2A. Interacts with ATF5; the interaction stabilizes ATF5 at the protein level in a kinase-independent manner. Mg(2+) is required as a cofactor. Phosphorylated on Thr-298. Intermolecular autophosphorylation on Thr-298 activates the enzyme. In terms of tissue distribution, expressed at high levels in the brain, and at lower levels in heart, kidney, lung and liver.

The protein localises to the nucleus. The protein resides in the cytoplasm. The catalysed reaction is L-seryl-[protein] + ATP = O-phospho-L-seryl-[protein] + ADP + H(+). It catalyses the reaction L-threonyl-[protein] + ATP = O-phospho-L-threonyl-[protein] + ADP + H(+). With respect to regulation, activated by the non-canonical Wnt signaling pathway, in which WNT5A leads to activation of MAP3K7/TAK1 and HIPK2, which subsequently phosphorylates and activates this protein. Activated by dimerization and subsequent intermolecular autophosphorylation on Thr-298. Other cytokines such as IL6 may also activate this regulatory circuit. Serine/threonine-protein kinase that regulates a number of transcription factors with key roles in cell fate determination. Positive effector of the non-canonical Wnt signaling pathway, acting downstream of WNT5A, MAP3K7/TAK1 and HIPK2. Negative regulator of the canonical Wnt/beta-catenin signaling pathway. Binds to and phosphorylates TCF7L2/TCF4 and LEF1, promoting the dissociation of the TCF7L2/LEF1/beta-catenin complex from DNA, as well as the ubiquitination and subsequent proteolysis of LEF1. Together these effects inhibit the transcriptional activation of canonical Wnt/beta-catenin target genes. Negative regulator of the Notch signaling pathway. Binds to and phosphorylates NOTCH1, thereby preventing the formation of a transcriptionally active ternary complex of NOTCH1, RBPJ/RBPSUH and MAML1. Negative regulator of the MYB family of transcription factors. Phosphorylation of MYB leads to its subsequent proteolysis while phosphorylation of MYBL1 and MYBL2 inhibits their interaction with the coactivator CREBBP. Other transcription factors may also be inhibited by direct phosphorylation of CREBBP itself. Acts downstream of IL6 and MAP3K7/TAK1 to phosphorylate STAT3, which is in turn required for activation of NLK by MAP3K7/TAK1. Upon IL1B stimulus, cooperates with ATF5 to activate the transactivation activity of C/EBP subfamily members. Phosphorylates ATF5 but also stabilizes ATF5 protein levels in a kinase-independent manner. Acts as an inhibitor of the mTORC1 complex in response to osmotic stress by mediating phosphorylation of RPTOR, thereby preventing recruitment of the mTORC1 complex to lysosomes. The protein is Serine/threonine-protein kinase NLK of Mus musculus (Mouse).